The following is a 186-amino-acid chain: Elongation factor P (186 aa).

The protein belongs to the elongation factor P family.

The protein localises to the cytoplasm. It participates in protein biosynthesis; polypeptide chain elongation. In terms of biological role, involved in peptide bond synthesis. Stimulates efficient translation and peptide-bond synthesis on native or reconstituted 70S ribosomes in vitro. Probably functions indirectly by altering the affinity of the ribosome for aminoacyl-tRNA, thus increasing their reactivity as acceptors for peptidyl transferase. In Shewanella baltica (strain OS223), this protein is Elongation factor P.